The following is a 317-amino-acid chain: Methionyl-tRNA formyltransferase (317 aa).

109 to 112 (SLLP) contributes to the (6S)-5,6,7,8-tetrahydrofolate binding site.

The protein belongs to the Fmt family.

It catalyses the reaction L-methionyl-tRNA(fMet) + (6R)-10-formyltetrahydrofolate = N-formyl-L-methionyl-tRNA(fMet) + (6S)-5,6,7,8-tetrahydrofolate + H(+). Functionally, attaches a formyl group to the free amino group of methionyl-tRNA(fMet). The formyl group appears to play a dual role in the initiator identity of N-formylmethionyl-tRNA by promoting its recognition by IF2 and preventing the misappropriation of this tRNA by the elongation apparatus. The sequence is that of Methionyl-tRNA formyltransferase from Desulforamulus reducens (strain ATCC BAA-1160 / DSM 100696 / MI-1) (Desulfotomaculum reducens).